A 204-amino-acid chain; its full sequence is Dephospho-CoA kinase (204 aa).

Residues 3–200 form the DPCK domain; the sequence is VVAITGGIGS…ETYMAFASQQ (198 aa). 11–16 lines the ATP pocket; it reads GSGKTT.

This sequence belongs to the CoaE family.

It is found in the cytoplasm. The enzyme catalyses 3'-dephospho-CoA + ATP = ADP + CoA + H(+). It participates in cofactor biosynthesis; coenzyme A biosynthesis; CoA from (R)-pantothenate: step 5/5. In terms of biological role, catalyzes the phosphorylation of the 3'-hydroxyl group of dephosphocoenzyme A to form coenzyme A. This is Dephospho-CoA kinase from Aeromonas hydrophila.